The sequence spans 497 residues: Bloodstream-specific protein 2 (497 aa).

The signal sequence occupies residues 1–14 (MRAIFLVALALATM). A Thioredoxin 1 domain is found at 15 to 124 (RESTAESLKL…IIKYIKANVG (110 aa)). Residue asparagine 30 is glycosylated (N-linked (GlcNAc...) asparagine). The cysteines at positions 48 and 51 are disulfide-linked. Residues asparagine 63, asparagine 85, asparagine 153, asparagine 154, asparagine 250, and asparagine 278 are each glycosylated (N-linked (GlcNAc...) asparagine). The 122-residue stretch at 334–455 (EPTIKSLPVP…VYEFVRKHVT (122 aa)) folds into the Thioredoxin 2 domain. Residues cysteine 378 and cysteine 381 each act as nucleophile in the active site. A disulfide bond links cysteine 378 and cysteine 381. Residues asparagine 413, asparagine 465, asparagine 476, asparagine 482, asparagine 485, and asparagine 488 are each glycosylated (N-linked (GlcNAc...) asparagine). Residues 461–497 (EKPANVTEEKKSEEENKSSKSNESNDSNESNVDKQDL) are disordered. The segment covering 467–480 (TEEKKSEEENKSSK) has biased composition (basic and acidic residues). The segment covering 481-490 (SNESNDSNES) has biased composition (low complexity).

Belongs to the protein disulfide isomerase family.

This is Bloodstream-specific protein 2 (BS2) from Trypanosoma brucei brucei.